We begin with the raw amino-acid sequence, 314 residues long: Coiled-coil domain-containing protein 42 like-2 (314 aa).

Coiled-coil stretches lie at residues 34-139 (RLLE…RQEK) and 175-233 (NKLL…WESR).

Belongs to the CFAP73 family.

This Xenopus laevis (African clawed frog) protein is Coiled-coil domain-containing protein 42 like-2.